Here is a 254-residue protein sequence, read N- to C-terminus: 14-3-3-like protein RA215 (254 aa).

The protein belongs to the 14-3-3 family.

The chain is 14-3-3-like protein RA215 from Solanum tuberosum (Potato).